The primary structure comprises 735 residues: Phosphoribosylformylglycinamidine synthase subunit PurL (735 aa).

The active site involves His48. ATP contacts are provided by Tyr51 and Lys90. Glu92 provides a ligand contact to Mg(2+). Residues Ser93–His96 and Arg115 contribute to the substrate site. His94 acts as the Proton acceptor in catalysis. Residue Asp116 coordinates Mg(2+). Gln239 contributes to the substrate binding site. A Mg(2+)-binding site is contributed by Asp267. Glu311–Gln313 provides a ligand contact to substrate. 2 residues coordinate ATP: Asp492 and Gly529. Asn530 serves as a coordination point for Mg(2+). Ser532 provides a ligand contact to substrate.

This sequence belongs to the FGAMS family. Monomer. Part of the FGAM synthase complex composed of 1 PurL, 1 PurQ and 2 PurS subunits.

It is found in the cytoplasm. It catalyses the reaction N(2)-formyl-N(1)-(5-phospho-beta-D-ribosyl)glycinamide + L-glutamine + ATP + H2O = 2-formamido-N(1)-(5-O-phospho-beta-D-ribosyl)acetamidine + L-glutamate + ADP + phosphate + H(+). Its pathway is purine metabolism; IMP biosynthesis via de novo pathway; 5-amino-1-(5-phospho-D-ribosyl)imidazole from N(2)-formyl-N(1)-(5-phospho-D-ribosyl)glycinamide: step 1/2. In terms of biological role, part of the phosphoribosylformylglycinamidine synthase complex involved in the purines biosynthetic pathway. Catalyzes the ATP-dependent conversion of formylglycinamide ribonucleotide (FGAR) and glutamine to yield formylglycinamidine ribonucleotide (FGAM) and glutamate. The FGAM synthase complex is composed of three subunits. PurQ produces an ammonia molecule by converting glutamine to glutamate. PurL transfers the ammonia molecule to FGAR to form FGAM in an ATP-dependent manner. PurS interacts with PurQ and PurL and is thought to assist in the transfer of the ammonia molecule from PurQ to PurL. The chain is Phosphoribosylformylglycinamidine synthase subunit PurL from Bradyrhizobium sp. (strain BTAi1 / ATCC BAA-1182).